The primary structure comprises 62 residues: UPF0434 protein BP2767 (62 aa).

It belongs to the UPF0434 family.

This is UPF0434 protein BP2767 from Bordetella pertussis (strain Tohama I / ATCC BAA-589 / NCTC 13251).